Consider the following 207-residue polypeptide: Segregation and condensation protein B (207 aa).

This sequence belongs to the ScpB family. In terms of assembly, homodimer. Homodimerization may be required to stabilize the binding of ScpA to the Smc head domains. Component of a cohesin-like complex composed of ScpA, ScpB and the Smc homodimer, in which ScpA and ScpB bind to the head domain of Smc. The presence of the three proteins is required for the association of the complex with DNA.

Its subcellular location is the cytoplasm. Participates in chromosomal partition during cell division. May act via the formation of a condensin-like complex containing Smc and ScpA that pull DNA away from mid-cell into both cell halves. The chain is Segregation and condensation protein B from Mycoplasmopsis pulmonis (strain UAB CTIP) (Mycoplasma pulmonis).